The chain runs to 300 residues: Tyrosine recombinase XerC (300 aa).

The Core-binding (CB) domain maps to 2 to 88; the sequence is TQEGKLEQQF…SLRSFYTFLL (87 aa). The 186-residue stretch at 109–294 folds into the Tyr recombinase domain; the sequence is RLPKFFYSEE…TKEHLKSTYM (186 aa). Residues Arg-150, Lys-174, His-246, Arg-249, and His-272 contribute to the active site. The O-(3'-phospho-DNA)-tyrosine intermediate role is filled by Tyr-281.

It belongs to the 'phage' integrase family. XerC subfamily. As to quaternary structure, forms a cyclic heterotetrameric complex composed of two molecules of XerC and two molecules of XerD.

Its subcellular location is the cytoplasm. Site-specific tyrosine recombinase, which acts by catalyzing the cutting and rejoining of the recombining DNA molecules. The XerC-XerD complex is essential to convert dimers of the bacterial chromosome into monomers to permit their segregation at cell division. It also contributes to the segregational stability of plasmids. In Listeria welshimeri serovar 6b (strain ATCC 35897 / DSM 20650 / CCUG 15529 / CIP 8149 / NCTC 11857 / SLCC 5334 / V8), this protein is Tyrosine recombinase XerC.